We begin with the raw amino-acid sequence, 359 residues long: Histidinol-phosphate aminotransferase (359 aa).

Residue Lys-217 is modified to N6-(pyridoxal phosphate)lysine.

Belongs to the class-II pyridoxal-phosphate-dependent aminotransferase family. Histidinol-phosphate aminotransferase subfamily. Homodimer. Requires pyridoxal 5'-phosphate as cofactor.

It catalyses the reaction L-histidinol phosphate + 2-oxoglutarate = 3-(imidazol-4-yl)-2-oxopropyl phosphate + L-glutamate. It functions in the pathway amino-acid biosynthesis; L-histidine biosynthesis; L-histidine from 5-phospho-alpha-D-ribose 1-diphosphate: step 7/9. This Roseobacter denitrificans (strain ATCC 33942 / OCh 114) (Erythrobacter sp. (strain OCh 114)) protein is Histidinol-phosphate aminotransferase.